A 401-amino-acid chain; its full sequence is Sulfate adenylyltransferase (401 aa).

Belongs to the sulfate adenylyltransferase family.

It carries out the reaction sulfate + ATP + H(+) = adenosine 5'-phosphosulfate + diphosphate. It functions in the pathway sulfur metabolism; hydrogen sulfide biosynthesis; sulfite from sulfate: step 1/3. This chain is Sulfate adenylyltransferase, found in Alcanivorax borkumensis (strain ATCC 700651 / DSM 11573 / NCIMB 13689 / SK2).